The primary structure comprises 391 residues: Period circadian protein (391 aa).

Disordered regions lie at residues 27–121 (VTAP…PPVT), 163–188 (MLEY…WEGE), 241–270 (GSSA…QFTQ), and 328–357 (SPSG…TSQA). Positions 93–114 (GTSGTGNSGDGGGGGGADGPGS) are enriched in gly residues. Gly residues predominate over residues 241–255 (GSSAGGNGSGTGNNN).

As to quaternary structure, forms a heterodimer with timeless (TIM); the complex then translocates into the nucleus. Phosphorylated with a circadian rhythmicity, probably by the double-time protein (dbt). Phosphorylation could be implicated in the stability of per monomer and in the formation of heterodimer per-tim.

The protein localises to the nucleus. The protein resides in the cytoplasm. It localises to the perinuclear region. Its function is as follows. Essential for biological clock functions. Determines the period length of circadian and ultradian rhythms; an increase in PER dosage leads to shortened circadian rhythms and a decrease leads to lengthened circadian rhythms. Essential for the circadian rhythmicity of locomotor activity, eclosion behavior, and for the rhythmic component of the male courtship song that originates in the thoracic nervous system. The biological cycle depends on the rhythmic formation and nuclear localization of the TIM-PER complex. Light induces the degradation of TIM, which promotes elimination of PER. Nuclear activity of the heterodimer coordinatively regulates PER and TIM transcription through a negative feedback loop. Behaves as a negative element in circadian transcriptional loop. Does not appear to bind DNA, suggesting indirect transcriptional inhibition. The chain is Period circadian protein (per) from Drosophila insularis (Fruit fly).